We begin with the raw amino-acid sequence, 69 residues long: Conotoxin Cal12.1p5 (69 aa).

A propeptide spanning residues 1–23 (DLITNSYTRGKPRHVTSWRNLKT) is cleaved from the precursor.

Contains 4 disulfide bonds. Expressed by the venom duct.

Its subcellular location is the secreted. This chain is Conotoxin Cal12.1p5, found in Californiconus californicus (California cone).